The primary structure comprises 81 residues: DNA-binding protein TubR (81 aa).

Monomer; probably dimerizes when bound to DNA. Binds to TubZ when associated with tubC DNA.

The protein resides in the host cytoplasm. A DNA-binding protein that is part of the type III partition system presumably used to ensure correct segregation of this bacteriophage. Binds to tubC (centromere-like site) DNA upstream of its own gene in a sequence-specific fashion (consensus TTGAC); binds to multiple sites in the tubC region, probably spreading from an initial site. Upon binding to tubC forms flexible loops over about 1 kb of DNA that forms 2 rings, covering tubC and the promoter region. This probably shuts off transcription of the operon. DNA is both bent and untwisted by TubR. The TubR-tubC DNA complex binds to TubZ forming large bundles and decreasing TubZ's GTPase activity. In Clostridium botulinum C phage (Clostridium botulinum C bacteriophage), this protein is DNA-binding protein TubR.